The following is a 337-amino-acid chain: Mitochondrial metalloendopeptidase OMA1 (337 aa).

At 1–68 (MFLNKYISNY…QPNPRDKRFQ (68 aa)) the chain is on the mitochondrial matrix side. Residues 69 to 89 (WIFGALIAGGGVYYFTHLEYV) form a helical membrane-spanning segment. Topologically, residues 90–337 (PISNRRRFND…MLQSFKEVHW (248 aa)) are mitochondrial intermembrane. Histidine 195 provides a ligand contact to Zn(2+). Residue glutamate 196 is part of the active site. Residues histidine 199 and glutamate 250 each coordinate Zn(2+). A disulfide bridge connects residues cysteine 265 and cysteine 321.

The protein belongs to the peptidase M48 family. Requires Zn(2+) as cofactor.

It localises to the mitochondrion inner membrane. Protease activity is induced in response to various mitochondrial stress. In terms of biological role, protease that is part of the quality control system in the inner membrane of mitochondria. Cleaves and thereby promotes the turnover of mistranslated or misfolded membrane protein. In Schizosaccharomyces pombe (strain 972 / ATCC 24843) (Fission yeast), this protein is Mitochondrial metalloendopeptidase OMA1.